The sequence spans 858 residues: MQEQYNPQDIEHKVQQHWDNNKTFVVSEDPNKEKFYCLSMFPYPSGRLHMGHVRNYTIGDVVSRFQRLQGKNVLQPIGWDAFGLPAENAAVKNNTAPAPWTYENIEYMKNQLKLLGFGYDWNREFATCRPEYYRWEQEFFTKLFAKGLVYKKTSSVNWCPNDQTVLANEQVEDGCCWRCDTPVEQKEIPQWFIKITAYAQELLDDLDNLDGWPEMVKTMQRNWIGRSEGVELKFAVKGENTDLEVYTTRPDTLMGVTYVGIAAGHPLATKAAANNPALAAFIDECKNTKVAEAEIATMEKKGMATGLTAIHPLNGREVPIYIANFVLMDYGTGAVMAVPAHDQRDFEFATKYGLDIIPVIKPADGSELDVSEAAYTEKGVLFASGEFDGLDFQAAFNAIAAKLEAEGKGKKTVNFRLRDWGVSRQRYWGAPIPMVTTEDGQVHPVPADQLPVILPEDVVMDGVTSPIKADKEWAKTTFNGEPALRETDTFDTFMESSWYYARYCSPQADDILDPEKANYWLPVDQYIGGIEHACMHLLYSRFFHKLLRDAGYVKSDEPFKKLLCQGMVLADAFYYTNDKGGKEWVSPTEVKVERDGKGRIVSAVDATGRQVEHSGMIKMSKSKNNGIDPQEMVDKYGADTVRLFMMFASPADMTLEWQESGVEGANRFLRRVWKLVREHTELGQAPALDASALNADQKALRRDVHKTIAKVTDDVARRQTFNTAIAAIMELMNKLTKAPMTEAQDRAILDEALKAITLMLYPITPHICFEMWVALGQSNIDTASWPTYDEAALVEDEKLIVLQVNGKLRGKLTVAADATQQQVEALGMQDENVQKFIDGLTVRKVIYVPGKLLNIVAN.

The 'HIGH' region signature appears at 42-52; the sequence is PYPSGRLHMGH. The 'KMSKS' region motif lies at 618–622; the sequence is KMSKS. Position 621 (Lys-621) interacts with ATP.

It belongs to the class-I aminoacyl-tRNA synthetase family.

The protein localises to the cytoplasm. The enzyme catalyses tRNA(Leu) + L-leucine + ATP = L-leucyl-tRNA(Leu) + AMP + diphosphate. The protein is Leucine--tRNA ligase of Vibrio cholerae serotype O1 (strain ATCC 39315 / El Tor Inaba N16961).